A 239-amino-acid polypeptide reads, in one-letter code: Leucine rich adaptor protein 1 (239 aa).

LRR repeat units lie at residues 55-83 (LGDKIMALKMELAYLRAIDVKILQQLVTL) and 93-114 (LLEERGTLTSHCSSLTSSQYSL). Residues 107–116 (LTSSQYSLTG) are compositionally biased toward low complexity. Disordered regions lie at residues 107-139 (LTSSQYSLTGGSPGRSRRGSWDSLPDTSTTDRL) and 200-219 (KPPGERLQGGPPESPEDESA). S118, S126, S129, and S213 each carry phosphoserine.

Forms a tripartite complex with CDC42BPA/CDC42BPB and MYO18A acting as an adapter connecting both. Its binding to CDC42BPA/CDC42BPB results in their activation by abolition of their negative autoregulation. Interacts with CDC42BPA and CDC42BPB.

The protein resides in the cytoplasm. Acts as an activator of the canonical NF-kappa-B pathway and drive the production of pro-inflammatory cytokines. Promotes the antigen (Ag)-presenting and priming function of dendritic cells via the canonical NF-kappa-B pathway. In concert with MYO18A and CDC42BPA/CDC42BPB, is involved in modulating lamellar actomyosin retrograde flow that is crucial to cell protrusion and migration. Activates CDC42BPA/CDC42BPB and targets it to actomyosin through its interaction with MYO18A, leading to MYL9/MLC2 phosphorylation and MYH9/MYH10-dependent actomyosin assembly in the lamella. This is Leucine rich adaptor protein 1 (LURAP1) from Homo sapiens (Human).